Here is a 515-residue protein sequence, read N- to C-terminus: ATP synthase subunit alpha (515 aa).

Residue 171-178 (GDRQTGKT) coordinates ATP.

It belongs to the ATPase alpha/beta chains family. F-type ATPases have 2 components, CF(1) - the catalytic core - and CF(0) - the membrane proton channel. CF(1) has five subunits: alpha(3), beta(3), gamma(1), delta(1), epsilon(1). CF(0) has three main subunits: a(1), b(2) and c(9-12). The alpha and beta chains form an alternating ring which encloses part of the gamma chain. CF(1) is attached to CF(0) by a central stalk formed by the gamma and epsilon chains, while a peripheral stalk is formed by the delta and b chains.

The protein resides in the cell inner membrane. It carries out the reaction ATP + H2O + 4 H(+)(in) = ADP + phosphate + 5 H(+)(out). Produces ATP from ADP in the presence of a proton gradient across the membrane. The alpha chain is a regulatory subunit. This is ATP synthase subunit alpha from Coxiella burnetii (strain CbuK_Q154) (Coxiella burnetii (strain Q154)).